The sequence spans 697 residues: Polyribonucleotide nucleotidyltransferase (697 aa).

The Mg(2+) site is built by Asp-488 and Asp-494. The KH domain occupies 555–614; the sequence is PTFEVITINPDKIRDVIGKGGATIRQITEETKAAIDIEDNGTVRVFGETKAAAKAAIAKI. In terms of domain architecture, S1 motif spans 624–692; sequence GKIYDGKVIR…NRGRIKLTMK (69 aa).

Belongs to the polyribonucleotide nucleotidyltransferase family. As to quaternary structure, component of the RNA degradosome, which is a multiprotein complex involved in RNA processing and mRNA degradation. Mg(2+) serves as cofactor.

It is found in the cytoplasm. The enzyme catalyses RNA(n+1) + phosphate = RNA(n) + a ribonucleoside 5'-diphosphate. Its function is as follows. Involved in mRNA degradation. Catalyzes the phosphorolysis of single-stranded polyribonucleotides processively in the 3'- to 5'-direction. This Acinetobacter baumannii (strain AB307-0294) protein is Polyribonucleotide nucleotidyltransferase.